The chain runs to 214 residues: Probable transaldolase (214 aa).

Lys83 (schiff-base intermediate with substrate) is an active-site residue.

It belongs to the transaldolase family. Type 3B subfamily.

The protein resides in the cytoplasm. The enzyme catalyses D-sedoheptulose 7-phosphate + D-glyceraldehyde 3-phosphate = D-erythrose 4-phosphate + beta-D-fructose 6-phosphate. It participates in carbohydrate degradation; pentose phosphate pathway; D-glyceraldehyde 3-phosphate and beta-D-fructose 6-phosphate from D-ribose 5-phosphate and D-xylulose 5-phosphate (non-oxidative stage): step 2/3. Functionally, transaldolase is important for the balance of metabolites in the pentose-phosphate pathway. The chain is Probable transaldolase from Carboxydothermus hydrogenoformans (strain ATCC BAA-161 / DSM 6008 / Z-2901).